Reading from the N-terminus, the 466-residue chain is Vimentin (466 aa).

A compositionally biased stretch (low complexity) spans 1-13 (MSTRSVSSSSYRR). The tract at residues 1–32 (MSTRSVSSSSYRRMFGGPGTGSRPSSTRSYVT) is disordered. Ser-2 carries the N-acetylserine modification. A head region spans residues 2–95 (STRSVSSSSY…FSLADAINTE (94 aa)). 5 positions are modified to phosphoserine: Ser-5, Ser-7, Ser-8, Ser-9, and Ser-10. The O-linked (GlcNAc) serine; alternate glycan is linked to Ser-7. Thr-20 is modified (phosphothreonine). The segment covering 21-32 (GSRPSSTRSYVT) has biased composition (low complexity). Phosphoserine is present on residues Ser-25 and Ser-26. Residue Thr-33 is glycosylated (O-linked (GlcNAc) threonine). Phosphoserine is present on residues Ser-34, Ser-39, Ser-42, Ser-47, Ser-49, and Ser-51. A glycan (O-linked (GlcNAc) serine; alternate) is linked at Ser-34. Tyr-53 carries the post-translational modification Phosphotyrosine. Ser-55 and Ser-56 each carry phosphoserine. At Tyr-61 the chain carries Phosphotyrosine. Residues Ser-66, Ser-72, Ser-73, Ser-83, and Ser-87 each carry the phosphoserine modification. The segment at 96–131 (FKNTRTNEKVELQELNDRFANYIDKVRFLEQQNKIL) is coil 1A. Residues 96-131 (FKNTRTNEKVELQELNDRFANYIDKVRFLEQQNKIL) are a coiled coil. One can recognise an IF rod domain in the interval 103-411 (EKVELQELND…KLLEGEESRI (309 aa)). Residue Lys-104 forms a Glycyl lysine isopeptide (Lys-Gly) (interchain with G-Cter in SUMO2) linkage. Tyr-117 bears the Phosphotyrosine mark. Residues Lys-120, Lys-129, and Lys-139 each carry the N6-acetyllysine; alternate modification. N6-succinyllysine; alternate is present on residues Lys-120 and Lys-129. Residues Lys-120, Lys-129, and Lys-139 each participate in a glycyl lysine isopeptide (Lys-Gly) (interchain with G-Cter in SUMO2); alternate cross-link. A linker 1 region spans residues 132–153 (LAELEQLKGQGKSRLGDLYEEE). The residue at position 144 (Ser-144) is a Phosphoserine. Residues 154–245 (MRELRRQVDQ…KLHDEEIQEL (92 aa)) adopt a coiled-coil conformation. Positions 154-245 (MRELRRQVDQ…KLHDEEIQEL (92 aa)) are coil 1B. Lys-168 carries the post-translational modification N6-acetyllysine. Lys-188 is modified (N6-acetyllysine; alternate). Lys-188 bears the N6-succinyllysine; alternate mark. Residue Ser-214 is modified to Phosphoserine. Lys-223 carries the N6-acetyllysine; alternate modification. Lys-223 is covalently cross-linked (Glycyl lysine isopeptide (Lys-Gly) (interchain with G-Cter in SUMO2); alternate). The residue at position 226 (Ser-226) is a Phosphoserine. Lys-235 carries the N6-acetyllysine modification. A linker 12 region spans residues 246-268 (QAQIQDQHVQIDMDVSKPDLTAA). A Glycyl lysine isopeptide (Lys-Gly) (interchain with G-Cter in SUMO2) cross-link involves residue Lys-262. Residues 269-407 (LRDVRQQYES…ATYRKLLEGE (139 aa)) are coil 2. Lys-294 is subject to N6-acetyllysine; alternate. The residue at position 294 (Lys-294) is an N6-succinyllysine; alternate. Lys-294 is covalently cross-linked (Glycyl lysine isopeptide (Lys-Gly) (interchain with G-Cter in SUMO2); alternate). Ser-299 bears the Phosphoserine mark. Residues 303 to 407 (NRNNDALRQA…ATYRKLLEGE (105 aa)) are a coiled coil. Lys-313 is covalently cross-linked (Glycyl lysine isopeptide (Lys-Gly) (interchain with G-Cter in SUMO2)). Ser-325 is subject to Phosphoserine. Positions 326 to 329 (LTCE) match the [IL]-x-C-x-x-[DE] motif motif. Lys-373 is subject to N6-acetyllysine; alternate. A Glycyl lysine isopeptide (Lys-Gly) (interchain with G-Cter in SUMO2); alternate cross-link involves residue Lys-373. Positions 408–466 (ESRIALPLPNFSSLNLRETNLDSLPLVDTHSKRTLLIKTVETRDGQVINETSQHHDDLE) are tail. Residues Ser-409, Ser-419, and Ser-420 each carry the phosphoserine modification. Residue Thr-426 is modified to Phosphothreonine. Position 430 is a phosphoserine (Ser-430). At Thr-436 the chain carries Phosphothreonine. At Ser-438 the chain carries Phosphoserine. Residue Lys-439 forms a Glycyl lysine isopeptide (Lys-Gly) (interchain with G-Cter in SUMO2) linkage. Lys-445 is subject to N6-acetyllysine; alternate. Lys-445 carries the N6-succinyllysine; alternate modification. Lys-445 participates in a covalent cross-link: Glycyl lysine isopeptide (Lys-Gly) (interchain with G-Cter in SUMO2); alternate. Lys-445 is covalently cross-linked (Glycyl lysine isopeptide (Lys-Gly) (interchain with G-Cter in SUMO1); alternate). Residues Thr-446 and Thr-458 each carry the phosphothreonine modification. Ser-459 bears the Phosphoserine mark.

The protein belongs to the intermediate filament family. In terms of assembly, homomer assembled from elementary dimers. Identified in complexes that contain VIM, EZR, AHNAK, BFSP1, BFSP2, ANK2, PLEC, PRX and spectrin. Interacts with BCAS3. Interacts with LGSN. Interacts with SYNM. Interacts (via rod region) with PLEC (via CH 1 domain). Interacts with STK33. Interacts with LARP6. Interacts with RAB8B. Interacts with TOR1A; the interaction associates TOR1A with the cytoskeleton. Interacts with TOR1AIP1. Interacts with TOR1AIP1. Interacts with DIAPH1. Interacts with EPPK1; interaction is dependent of higher-order structure of intermediate filament. Interacts with the non-receptor tyrosine kinase SRMS; the interaction leads to phosphorylation of VIM. Interacts with NOD2. Interacts (via head region) with CORO1C. Interacts with HDGF. Interacts with PRKCE (via phorbol-ester/DAG-type 2 domain). Interacts with BFSP2. Interacts with PPL. Interacts with PKP1 and PKP2. Interacts with SCRIB (via PDZ domains); the interaction protects SCRIB from proteasomal degradation and facilitates SCRIB localization to intermediate filaments, the interaction is reduced by cell contact inhibition. In terms of processing, filament disassembly during mitosis is promoted by phosphorylation at Ser-55 as well as by nestin. One of the most prominent phosphoproteins in various cells of mesenchymal origin. Phosphorylation is enhanced during cell division, at which time vimentin filaments are significantly reorganized. Phosphorylation by PKN1 inhibits the formation of filaments. Phosphorylated at Ser-56 by CDK5 during neutrophil secretion in the cytoplasm. Phosphorylated by STK33. Phosphorylated on tyrosine residues by SRMS. Post-translationally, O-glycosylated during cytokinesis at sites identical or close to phosphorylation sites, this interferes with the phosphorylation status. S-nitrosylation is induced by interferon-gamma and oxidatively-modified low-densitity lipoprotein (LDL(ox)) possibly implicating the iNOS-S100A8/9 transnitrosylase complex.

The protein localises to the cytoplasm. The protein resides in the cytoskeleton. Its subcellular location is the nucleus matrix. It localises to the cell membrane. Functionally, vimentins are class-III intermediate filaments found in various non-epithelial cells, especially mesenchymal cells. Vimentin is attached to the nucleus, endoplasmic reticulum, and mitochondria, either laterally or terminally. Plays a role in cell directional movement, orientation, cell sheet organization and Golgi complex polarization at the cell migration front. Protects SCRIB from proteasomal degradation and facilitates its localization to intermediate filaments in a cell contact-mediated manner. Involved with LARP6 in the stabilization of type I collagen mRNAs for CO1A1 and CO1A2. The sequence is that of Vimentin (VIM) from Canis lupus familiaris (Dog).